Consider the following 202-residue polypeptide: LexA repressor (202 aa).

Residues 28-48 (RAEIAQRLGFRSPNAAEEHLK) constitute a DNA-binding region (H-T-H motif). Residues serine 119 and lysine 156 each act as for autocatalytic cleavage activity in the active site.

Belongs to the peptidase S24 family. Homodimer.

It carries out the reaction Hydrolysis of Ala-|-Gly bond in repressor LexA.. Its function is as follows. Represses a number of genes involved in the response to DNA damage (SOS response), including recA and lexA. Binds to the 16 bp palindromic sequence 5'-CTGTATATATATACAG-3'. In the presence of single-stranded DNA, RecA interacts with LexA causing an autocatalytic cleavage which disrupts the DNA-binding part of LexA, leading to derepression of the SOS regulon and eventually DNA repair. The polypeptide is LexA repressor (Escherichia coli (strain K12 / MC4100 / BW2952)).